Reading from the N-terminus, the 93-residue chain is UPF0223 protein gbs1030 (93 aa).

This sequence belongs to the UPF0223 family.

The sequence is that of UPF0223 protein gbs1030 from Streptococcus agalactiae serotype III (strain NEM316).